Here is a 283-residue protein sequence, read N- to C-terminus: 2-dehydro-3-deoxyphosphooctonate aldolase (283 aa).

Belongs to the KdsA family.

It is found in the cytoplasm. The catalysed reaction is D-arabinose 5-phosphate + phosphoenolpyruvate + H2O = 3-deoxy-alpha-D-manno-2-octulosonate-8-phosphate + phosphate. Its pathway is carbohydrate biosynthesis; 3-deoxy-D-manno-octulosonate biosynthesis; 3-deoxy-D-manno-octulosonate from D-ribulose 5-phosphate: step 2/3. It participates in bacterial outer membrane biogenesis; lipopolysaccharide biosynthesis. The polypeptide is 2-dehydro-3-deoxyphosphooctonate aldolase (Vibrio cholerae serotype O1 (strain ATCC 39315 / El Tor Inaba N16961)).